The following is a 611-amino-acid chain: Serine protease FAM111A (611 aa).

Residues 16-28 (KCNMKIEHYFSPV) carry the PIP-box motif. Residue lysine 20 forms a Glycyl lysine isopeptide (Lys-Gly) (interchain with G-Cter in SUMO2) linkage. A Phosphoserine modification is found at serine 26. Residues lysine 30 and lysine 65 each participate in a glycyl lysine isopeptide (Lys-Gly) (interchain with G-Cter in SUMO2) cross-link. The tract at residues 44-73 (ESRGDPRATTNTQAQRFHSPKKNPEDQTMP) is disordered. Residues 336–611 (KVTKNSSSIK…DVEMMSDEDL (276 aa)) are interaction with SV40 large T antigen. Active-site charge relay system residues include histidine 385, aspartate 439, and serine 541.

The protein belongs to the FAM111 family. In terms of assembly, interacts (via PIP-box) with PCNA; then interaction is direct. (Microbial infection) Interacts with SV40 virus large T antigen and this interaction is required for efficient viral replication and sustained viral gene expression in restrictive cell types. As to quaternary structure, (Microbial infection) Interacts with vaccinia virus protein OPG079; this interaction promotes the degradation of OPG079. In terms of processing, autocatalytically cleaved; activating the protein. Autocatalytic cleavage takes place in trans.

The protein localises to the nucleus. Its subcellular location is the chromosome. It is found in the cytoplasm. In terms of biological role, single-stranded DNA-binding serine protease that mediates the proteolytic cleavage of covalent DNA-protein cross-links (DPCs) during DNA synthesis, thereby playing a key role in maintaining genomic integrity. DPCs are highly toxic DNA lesions that interfere with essential chromatin transactions, such as replication and transcription, and which are induced by reactive agents, such as UV light or formaldehyde. Protects replication fork from stalling by removing DPCs, such as covalently trapped topoisomerase 1 (TOP1) adducts on DNA lesion, or poly(ADP-ribose) polymerase 1 (PARP1)-DNA complexes trapped by PARP inhibitors. Required for PCNA loading on replication sites. Promotes S-phase entry and DNA synthesis. Also acts as a restriction factor for some viruses including SV40 polyomavirus and vaccinia virus. Mechanistically, affects nuclear barrier function during viral replication by mediating the disruption of the nuclear pore complex (NPC) via its protease activity. In turn, interacts with vaccinia virus DNA-binding protein OPG079 in the cytoplasm and promotes its degradation without the need of its protease activity but through autophagy. This chain is Serine protease FAM111A, found in Homo sapiens (Human).